Reading from the N-terminus, the 412-residue chain is FAD-dependent monooxygenase nscC (412 aa).

Positions 1–21 (MGKQQETILIIGAGIAGLTTS) are cleaved as a signal peptide. FAD-binding residues include glutamate 35 and alanine 46. A glycan (N-linked (GlcNAc...) asparagine) is linked at asparagine 92. Arginine 119 contacts FAD. N-linked (GlcNAc...) asparagine glycans are attached at residues asparagine 170 and asparagine 231. Residues aspartate 326 and glycine 339 each contribute to the FAD site.

It belongs to the paxM FAD-dependent monooxygenase family. Requires FAD as cofactor.

It participates in secondary metabolite biosynthesis. In terms of biological role, FAD-dependent monooxygenase; part of the gene cluster that mediates the biosynthesis of neosartoricin B, a prenylated anthracenone that probably exhibits T-cell antiproliferative activity, suggestive of a physiological role as an immunosuppressive agent. The non-reducing polyketide synthase nscA probably synthesizes and cyclizes the decaketide backbone. The hydrolase nscB then mediates the product release through hydrolysis followed by spontaneous decarboxylation. The prenyltransferase nscD catalyzes the addition of the dimethylallyl group to the aromatic C5. The FAD-dependent monooxygenase nscC is then responsible for the stereospecific hydroxylation at C2. Neosartoricin B can be converted into two additional compounds neosartoricins C and D. Neosartoricin C is a spirocyclic compound that is cyclized through the attack of C3 hydroxyl on C14, followed by dehydration. On the other hand, neosartoricin D is a further cyclized compound in which attack of C2 on C14 in neosartoricin C results in the formation of the acetal-containing dioxabicyclo-octanone ring. Both of these compounds are novel and possibly represent related metabolites of the gene cluster. This chain is FAD-dependent monooxygenase nscC, found in Arthroderma benhamiae (strain ATCC MYA-4681 / CBS 112371) (Trichophyton mentagrophytes).